A 444-amino-acid chain; its full sequence is Glutamate--tRNA ligase 1 (444 aa).

The short motif at 10 to 20 (PSPTGRLHLGN) is the 'HIGH' region element. A 'KMSKS' region motif is present at residues 241 to 245 (GLSKR). Lysine 244 is an ATP binding site.

It belongs to the class-I aminoacyl-tRNA synthetase family. Glutamate--tRNA ligase type 1 subfamily. Monomer.

Its subcellular location is the cytoplasm. The enzyme catalyses tRNA(Glu) + L-glutamate + ATP = L-glutamyl-tRNA(Glu) + AMP + diphosphate. Functionally, catalyzes the attachment of glutamate to tRNA(Glu) in a two-step reaction: glutamate is first activated by ATP to form Glu-AMP and then transferred to the acceptor end of tRNA(Glu). This Rhodospirillum rubrum (strain ATCC 11170 / ATH 1.1.1 / DSM 467 / LMG 4362 / NCIMB 8255 / S1) protein is Glutamate--tRNA ligase 1.